The primary structure comprises 1304 residues: Histone-lysine N-methyltransferase met-2 (1304 aa).

Residues 1–16 show a composition bias toward polar residues; that stretch reads MDQQEPSNNVDTSSIL. Residues 1-31 form a disordered region; it reads MDQQEPSNNVDTSSILSDDGMETQEQSSFVT. Residues 97–129 adopt a coiled-coil conformation; the sequence is NESEQEAVAAQRRVDAEKTAKDEAELKQQEEAE. One can recognise an MBD domain in the interval 834 to 909; the sequence is FHRNSPIHTP…FSFDARIDTA (76 aa). In terms of domain architecture, Pre-SET spans 971–1049; it reads SGCSCDGDCS…SCYNRVVQNN (79 aa). Zn(2+) contacts are provided by C973, C975, C979, C985, C987, C1030, C1034, C1036, and C1041. The SET domain occupies 1052 to 1277; sequence YPMHIFKTAQ…AGDELTWDYQ (226 aa). S-adenosyl-L-methionine-binding positions include 1062–1064, D1098, and Y1100; that span reads SGW. The span at 1113 to 1122 shows a compositional bias: basic and acidic residues; it reads EKGREDHETD. Positions 1113–1201 are disordered; the sequence is EKGREDHETD…DSMEKDNIES (89 aa). Residues 1128-1144 are compositionally biased toward acidic residues; that stretch reads DESDYDDEEGSDGDSGD. Positions 1152–1165 are enriched in basic and acidic residues; that stretch reads KRQDSSESGEETKR. Over residues 1166-1178 the composition is skewed to basic residues; sequence LTRQKRKQSKKSG. Residues 1182-1201 show a composition bias toward basic and acidic residues; that stretch reads SVEKDDTTPRDSMEKDNIES. S-adenosyl-L-methionine-binding positions include R1231 and 1234–1235; that span reads NH. Positions 1237, 1290, 1292, and 1297 each coordinate Zn(2+). The Post-SET domain occupies 1286 to 1302; the sequence is TQLTCHCGAENCTGRLL.

This sequence belongs to the class V-like SAM-binding methyltransferase superfamily.

The protein resides in the nucleus. The protein localises to the chromosome. It is found in the cytoplasm. It catalyses the reaction N(6)-methyl-L-lysyl(9)-[histone H3] + S-adenosyl-L-methionine = N(6),N(6)-dimethyl-L-lysyl(9)-[histone H3] + S-adenosyl-L-homocysteine + H(+). It carries out the reaction L-lysyl(9)-[histone H3] + S-adenosyl-L-methionine = N(6)-methyl-L-lysyl(9)-[histone H3] + S-adenosyl-L-homocysteine + H(+). Histone methyltransferase which is required for the mono- and dimethylation of 'Lys-9' of histone H3. This increases the efficiency of set-25-mediated trimethylation of histone H3 'Lys-9'. Involved in the transcriptional repression of lin-3 which is required for the negative regulation of vulval cell fate specification during postembryonic development. Has a role in blocking checkpoint signaling and mediating the transcriptional silencing of meiotic sex chromosome inactivation; a mechanism which enables checkpoint proteins to distinguish between the partnerless male X chromosome and asynapsed chromosomes thereby shielding the lone X from inappropriate activation of an apoptotic program. Operates redundantly with set-25 to position chromatin at the nuclear periphery. Required for small-RNA-induced H3K9 methylation. Together with set-25, protects and stabilizes repeat-rich genomic regions by suppressing transcription-induced replication stress through methylation of H3K9. Together with spr-5, required for transgenerational fertility. In Caenorhabditis elegans, this protein is Histone-lysine N-methyltransferase met-2 (met-2).